Reading from the N-terminus, the 212-residue chain is MKPPSSIQTSEFDSSDEEPIEDEQTPIHISWLSLSRVNCSQFLGLCALPGCKFKDVRRNVQKDTEELKSCGIQDIFVFCTRGELSKYRVPNLLDLYQQCGIITHHHPIADGGTPDIASCCEIMEELTTCLKNYRKTLIHCYGGLGRSCLVAACLLLYLSDTISPEQAIDSLRDLRGSGAIQTIKQYNYLHEFRDKLAAHLSSRDSQSRSVSR.

Residues 1–12 (MKPPSSIQTSEF) show a composition bias toward polar residues. Residues 1 to 20 (MKPPSSIQTSEFDSSDEEPI) form a disordered region. The tract at residues 1 to 34 (MKPPSSIQTSEFDSSDEEPIEDEQTPIHISWLSL) is interaction with CDK2. The Tyrosine-protein phosphatase domain occupies 33-201 (SLSRVNCSQF…FRDKLAAHLS (169 aa)). Catalysis depends on Cys-140, which acts as the Phosphocysteine intermediate.

This sequence belongs to the protein-tyrosine phosphatase family. In terms of assembly, interacts with cyclin-dependent kinases such as CDK1, CDK2 and CDK3. Does not interact with CDK4. Interacts (via C-terminus) with phosphorylated CDK2 (via C-terminal helix). Interacts with MS4A3 (via C-terminus); the interaction enhances CDKN3 enzymatic activity.

Its subcellular location is the cytoplasm. It localises to the perinuclear region. It carries out the reaction O-phospho-L-tyrosyl-[protein] + H2O = L-tyrosyl-[protein] + phosphate. It catalyses the reaction O-phospho-L-threonyl-[protein] + H2O = L-threonyl-[protein] + phosphate. The enzyme catalyses O-phospho-L-seryl-[protein] + H2O = L-seryl-[protein] + phosphate. May play a role in cell cycle regulation. Dual specificity CC phosphatase active toward substrates containing either phosphotyrosine or phosphoserine residues. Dephosphorylates CDK2 at 'Thr-160' in a cyclin-dependent manner. The protein is Cyclin-dependent kinase inhibitor 3 of Homo sapiens (Human).